Here is a 339-residue protein sequence, read N- to C-terminus: Phenylalanine--tRNA ligase alpha subunit (339 aa).

Mg(2+) is bound at residue Glu250.

The protein belongs to the class-II aminoacyl-tRNA synthetase family. Phe-tRNA synthetase alpha subunit type 1 subfamily. Tetramer of two alpha and two beta subunits. The cofactor is Mg(2+).

Its subcellular location is the cytoplasm. The catalysed reaction is tRNA(Phe) + L-phenylalanine + ATP = L-phenylalanyl-tRNA(Phe) + AMP + diphosphate + H(+). The polypeptide is Phenylalanine--tRNA ligase alpha subunit (Azobacteroides pseudotrichonymphae genomovar. CFP2).